The chain runs to 290 residues: ATP synthase gamma chain (290 aa).

Belongs to the ATPase gamma chain family. As to quaternary structure, F-type ATPases have 2 components, CF(1) - the catalytic core - and CF(0) - the membrane proton channel. CF(1) has five subunits: alpha(3), beta(3), gamma(1), delta(1), epsilon(1). CF(0) has three main subunits: a, b and c.

The protein resides in the cell membrane. Produces ATP from ADP in the presence of a proton gradient across the membrane. The gamma chain is believed to be important in regulating ATPase activity and the flow of protons through the CF(0) complex. The chain is ATP synthase gamma chain from Roseiflexus sp. (strain RS-1).